The primary structure comprises 92 residues: Cell division protein FtsB (92 aa).

Residues 1–3 (MKV) are Cytoplasmic-facing. A helical transmembrane segment spans residues 4–21 (VPILLFVLLAALQYRLWF). At 22 to 92 (GKNSIPEYVA…TFYRILPSEE (71 aa)) the chain is on the periplasmic side. Residues 31–74 (AMEKSVAEQAEQNTELLQRNNLLKADIQDLKVGLEAVEERARNE) are a coiled coil.

It belongs to the FtsB family. As to quaternary structure, part of a complex composed of FtsB, FtsL and FtsQ.

It is found in the cell inner membrane. Its function is as follows. Essential cell division protein. May link together the upstream cell division proteins, which are predominantly cytoplasmic, with the downstream cell division proteins, which are predominantly periplasmic. The sequence is that of Cell division protein FtsB from Pseudoalteromonas atlantica (strain T6c / ATCC BAA-1087).